The chain runs to 335 residues: NADP(+)-dependent glycerol-3-phosphate dehydrogenase (335 aa).

Residue G137 coordinates sn-glycerol 3-phosphate. A141 serves as a coordination point for NADPH. 4 residues coordinate sn-glycerol 3-phosphate: K192, D250, R259, and N260. The active-site Proton acceptor is the K192. R259 lines the NADPH pocket. Residues V287 and E289 each coordinate NADPH.

It belongs to the NAD-dependent glycerol-3-phosphate dehydrogenase family. Homodimer.

The protein localises to the cytoplasm. It catalyses the reaction sn-glycerol 3-phosphate + NADP(+) = dihydroxyacetone phosphate + NADPH + H(+). In terms of biological role, catalyzes the reduction of the glycolytic intermediate dihydroxyacetone phosphate (DHAP) to sn-glycerol 3-phosphate (G3P). Shows a 15-fold preference for NADPH over NADH in the reduction process. Can also catalyze the reverse reaction in vitro. Shows no activity with dihydroxyacetone, glycerol, glycerol-2-phosphate, D-glyceraldehyde-3-phosphate, DL-glyceraldehyde, D-erythrose-4-phosphate, D-fructose-6-phosphate, beta-D-glucose-6-phosphate, or alpha-D-galactose-1-phosphate. The protein is NADP(+)-dependent glycerol-3-phosphate dehydrogenase of Archaeoglobus fulgidus (strain ATCC 49558 / DSM 4304 / JCM 9628 / NBRC 100126 / VC-16).